We begin with the raw amino-acid sequence, 503 residues long: Ribose import ATP-binding protein RbsA 1 (503 aa).

ABC transporter domains are found at residues 5–241 (IALE…VGRA) and 253–495 (IGQP…AGIE). 37 to 44 (GENGAGKS) contacts ATP.

The protein belongs to the ABC transporter superfamily. Ribose importer (TC 3.A.1.2.1) family. As to quaternary structure, the complex is composed of an ATP-binding protein (RbsA), two transmembrane proteins (RbsC) and a solute-binding protein (RbsB).

The protein localises to the cell inner membrane. It carries out the reaction D-ribose(out) + ATP + H2O = D-ribose(in) + ADP + phosphate + H(+). Functionally, part of the ABC transporter complex RbsABC involved in ribose import. Responsible for energy coupling to the transport system. This is Ribose import ATP-binding protein RbsA 1 from Rhizobium meliloti (strain 1021) (Ensifer meliloti).